Reading from the N-terminus, the 366-residue chain is tRNA(Met) cytidine acetate ligase (366 aa).

Residues 7–20 (IAEF…HQYL), Gly101, Asn145, and Arg170 contribute to the ATP site.

It belongs to the TmcAL family.

It localises to the cytoplasm. It catalyses the reaction cytidine(34) in elongator tRNA(Met) + acetate + ATP = N(4)-acetylcytidine(34) in elongator tRNA(Met) + AMP + diphosphate. Functionally, catalyzes the formation of N(4)-acetylcytidine (ac(4)C) at the wobble position of elongator tRNA(Met), using acetate and ATP as substrates. First activates an acetate ion to form acetyladenylate (Ac-AMP) and then transfers the acetyl group to tRNA to form ac(4)C34. The chain is tRNA(Met) cytidine acetate ligase from Pediococcus pentosaceus (strain ATCC 25745 / CCUG 21536 / LMG 10740 / 183-1w).